The primary structure comprises 644 residues: uncharacterized protein (644 aa).

Disordered regions lie at residues 1–35 (MSSH…EYCS) and 48–106 (GNSH…SHHN). Ser-28 bears the Phosphoserine mark. Residues 58-70 (NGASSSNNNVAKS) show a composition bias toward low complexity. A compositionally biased stretch (polar residues) spans 83–106 (YDSTSNSNEPISFNEPDSSNSHHN). 12 consecutive transmembrane segments (helical) span residues 131-151 (ILPL…PLLF), 190-210 (AAFG…YGTM), 218-238 (LVLF…LYQS), 245-265 (YFVL…TVVA), 286-306 (LNFA…GFIV), 314-334 (YVFY…WLIL), 398-418 (VLLA…MGLL), 435-455 (LILS…FPLL), 522-542 (VWNA…LAVA), 546-566 (VALF…PCVQ), 583-603 (AAFA…YAFV), and 614-634 (NMIF…IFFM).

The protein localises to the membrane. This is an uncharacterized protein from Schizosaccharomyces pombe (strain 972 / ATCC 24843) (Fission yeast).